The sequence spans 259 residues: tRNA (guanine-N(7)-)-methyltransferase (259 aa).

The disordered stretch occupies residues 1–73; that stretch reads MGHHGQMHAQ…GPAEDPDRPG (73 aa). S-adenosyl-L-methionine-binding residues include Glu91, Glu116, Asn143, and Asp166. Asp166 is an active-site residue. Residues Lys170, Asp202, and 238–241 each bind substrate; that span reads TKYE.

Belongs to the class I-like SAM-binding methyltransferase superfamily. TrmB family.

The catalysed reaction is guanosine(46) in tRNA + S-adenosyl-L-methionine = N(7)-methylguanosine(46) in tRNA + S-adenosyl-L-homocysteine. The protein operates within tRNA modification; N(7)-methylguanine-tRNA biosynthesis. Catalyzes the formation of N(7)-methylguanine at position 46 (m7G46) in tRNA. The chain is tRNA (guanine-N(7)-)-methyltransferase from Mycolicibacterium paratuberculosis (strain ATCC BAA-968 / K-10) (Mycobacterium paratuberculosis).